The sequence spans 231 residues: Uracil-DNA glycosylase (231 aa).

Aspartate 70 acts as the Proton acceptor in catalysis.

The protein belongs to the uracil-DNA glycosylase (UDG) superfamily. UNG family.

It is found in the cytoplasm. The enzyme catalyses Hydrolyzes single-stranded DNA or mismatched double-stranded DNA and polynucleotides, releasing free uracil.. Functionally, excises uracil residues from the DNA which can arise as a result of misincorporation of dUMP residues by DNA polymerase or due to deamination of cytosine. This Pseudomonas fluorescens (strain Pf0-1) protein is Uracil-DNA glycosylase.